A 113-amino-acid polypeptide reads, in one-letter code: Cell division protein FtsB (113 aa).

The Cytoplasmic segment spans residues 1-3 (MRL). A helical membrane pass occupies residues 4 to 21 (ISLLLFVLLLAIQYPLWL). Residues 22-113 (GKGGWLRVWE…PNSPAATGRH (92 aa)) are Periplasmic-facing. Residues 34 to 63 (HQVQEQATRNQMLKLRNAKLEGEVKDLQDG) adopt a coiled-coil conformation. The disordered stretch occupies residues 93–113 (KVSATPPLPPPPNSPAATGRH).

It belongs to the FtsB family. In terms of assembly, part of a complex composed of FtsB, FtsL and FtsQ.

The protein localises to the cell inner membrane. In terms of biological role, essential cell division protein. May link together the upstream cell division proteins, which are predominantly cytoplasmic, with the downstream cell division proteins, which are predominantly periplasmic. The polypeptide is Cell division protein FtsB (Cupriavidus pinatubonensis (strain JMP 134 / LMG 1197) (Cupriavidus necator (strain JMP 134))).